A 338-amino-acid polypeptide reads, in one-letter code: Anthranilate phosphoribosyltransferase (338 aa).

5-phospho-alpha-D-ribose 1-diphosphate-binding positions include Gly-81, 84-85 (GD), Thr-89, 91-94 (NIST), 109-117 (KHGNRNLSS), and Ala-121. Residue Gly-81 coordinates anthranilate. Ser-93 contacts Mg(2+). An anthranilate-binding site is contributed by Asn-112. Arg-167 contributes to the anthranilate binding site. Residues Asp-226 and Glu-227 each contribute to the Mg(2+) site.

This sequence belongs to the anthranilate phosphoribosyltransferase family. In terms of assembly, homodimer. Mg(2+) is required as a cofactor.

The catalysed reaction is N-(5-phospho-beta-D-ribosyl)anthranilate + diphosphate = 5-phospho-alpha-D-ribose 1-diphosphate + anthranilate. It functions in the pathway amino-acid biosynthesis; L-tryptophan biosynthesis; L-tryptophan from chorismate: step 2/5. Its function is as follows. Catalyzes the transfer of the phosphoribosyl group of 5-phosphorylribose-1-pyrophosphate (PRPP) to anthranilate to yield N-(5'-phosphoribosyl)-anthranilate (PRA). This chain is Anthranilate phosphoribosyltransferase, found in Cereibacter sphaeroides (strain ATCC 17029 / ATH 2.4.9) (Rhodobacter sphaeroides).